The following is a 264-amino-acid chain: MAPTGLLVAGASFLAFRGLHWGLRRLPTPESAARDRWQWWNLCVSLAHSLLSGTGALLGLSLYPQMAADPIHGHPRWALVLVAVSVGYFLADGADLLWNQTLGKTWDLLCHHLVVVSCLSTAVLSGHYVGFSMVSLLLELNSACLHLRKLLLLSRQAPSLAFSVTSWASLATLALFRLVPLGWMSLWLFRQHHQVPLALVTLGGIGLVTVGIMSIILGIRILVNDVLQSRPHPPSPGHEKTRGTRTRRDNGPVTSNSSTLSLKD.

6 consecutive transmembrane segments (helical) span residues 3–23 (PTGL…HWGL), 42–62 (LCVS…GLSL), 77–97 (WALV…ADLL), 114–134 (VVVS…FSMV), 169–189 (SLAT…LWLF), and 199–219 (LVTL…ILGI). The region spanning 34–227 (RDRWQWWNLC…GIRILVNDVL (194 aa)) is the TLC domain. Residues 230-264 (RPHPPSPGHEKTRGTRTRRDNGPVTSNSSTLSLKD) form a disordered region. Residues 237–250 (GHEKTRGTRTRRDN) show a composition bias toward basic and acidic residues. The span at 252-264 (PVTSNSSTLSLKD) shows a compositional bias: polar residues.

The protein belongs to the TLCD family.

The protein localises to the cell membrane. Functionally, regulates the composition and fluidity of the plasma membrane. Inhibits the incorporation of membrane-fluidizing phospholipids containing omega-3 long-chain polyunsaturated fatty acids (LCPUFA) and thereby promotes membrane rigidity. Does not appear to have any effect on LCPUFA synthesis. The chain is TLC domain-containing protein 2 (TLCD2) from Homo sapiens (Human).